The chain runs to 305 residues: Homoserine O-acetyltransferase (305 aa).

The active-site Acyl-thioester intermediate is cysteine 142. Substrate-binding residues include lysine 163 and serine 192. Catalysis depends on histidine 235, which acts as the Proton acceptor. Glutamate 237 is an active-site residue. Arginine 249 lines the substrate pocket.

The protein belongs to the MetA family.

It is found in the cytoplasm. It carries out the reaction L-homoserine + acetyl-CoA = O-acetyl-L-homoserine + CoA. The protein operates within amino-acid biosynthesis; L-methionine biosynthesis via de novo pathway; O-acetyl-L-homoserine from L-homoserine: step 1/1. Its function is as follows. Transfers an acetyl group from acetyl-CoA to L-homoserine, forming acetyl-L-homoserine. The sequence is that of Homoserine O-acetyltransferase from Cereibacter sphaeroides (strain ATCC 17025 / ATH 2.4.3) (Rhodobacter sphaeroides).